We begin with the raw amino-acid sequence, 165 residues long: Deoxyuridine 5'-triphosphate nucleotidohydrolase (165 aa).

Residues Arg-66–Gly-68, Asn-79, Thr-83–Asp-85, and Lys-93 contribute to the substrate site. The segment at Glu-134–Gly-165 is disordered.

The protein belongs to the dUTPase family. Mg(2+) is required as a cofactor.

The enzyme catalyses dUTP + H2O = dUMP + diphosphate + H(+). It functions in the pathway pyrimidine metabolism; dUMP biosynthesis; dUMP from dCTP (dUTP route): step 2/2. Its function is as follows. This enzyme is involved in nucleotide metabolism: it produces dUMP, the immediate precursor of thymidine nucleotides and it decreases the intracellular concentration of dUTP so that uracil cannot be incorporated into DNA. This Nocardia farcinica (strain IFM 10152) protein is Deoxyuridine 5'-triphosphate nucleotidohydrolase.